The following is a 742-amino-acid chain: Synaptic vesicle glycoprotein 2A (742 aa).

The tract at residues 1-57 (MEEGFRDRAAFIRGAKDIAKEVKKHAAKKVVKGLDRVQDEYSRRSYSRFEEEEDDDD) is interaction with SYT1. The Cytoplasmic portion of the chain corresponds to 1-169 (MEEGFRDRAA…GHGRFQWTLY (169 aa)). The segment covering 40–49 (EYSRRSYSRF) has biased composition (basic and acidic residues). The segment at 40 to 145 (EYSRRSYSRF…RGEAQRRKDR (106 aa)) is disordered. Residues Ser80 and Ser81 each carry the phosphoserine modification. Thr84 is modified (phosphothreonine). Residues 122–137 (VRGGLSDGEGPPGGRG) are compositionally biased toward gly residues. Phosphoserine is present on Ser127. The helical transmembrane segment at 170 to 190 (FVLGLALMADGVEVFVVGFVL) threads the bilayer. The Extracellular portion of the chain corresponds to 191-205 (PSAEKDMCLSDSNKG). A helical transmembrane segment spans residues 206-226 (MLGLIVYLGMMVGAFLWGGLA). The Cytoplasmic portion of the chain corresponds to 227 to 233 (DRLGRRQ). The chain crosses the membrane as a helical span at residues 234-254 (CLLISLSVNSVFAFFSSFVQG). Residues 255 to 262 (YGTFLFCR) lie on the Extracellular side of the membrane. A helical membrane pass occupies residues 263–283 (LLSGVGIGGSIPIVFSYFSEF). Topologically, residues 284 to 294 (LAQEKRGEHLS) are cytoplasmic. The chain crosses the membrane as a helical span at residues 295–315 (WLCMFWMIGGVYAAAMAWAII). Residues 316-334 (PHYGWSFQMGSAYQFHSWR) lie on the Extracellular side of the membrane. A helical membrane pass occupies residues 335–355 (VFVLVCAFPSVFAIGALTTQP). Topologically, residues 356-447 (ESPRFFLENG…CFSPEYRRIT (92 aa)) are cytoplasmic. Ser393 carries the phosphoserine modification. A helical transmembrane segment spans residues 448–468 (LMMMGVWFTMSFSYYGLTVWF). Residues 469 to 598 (PDMIRHLQAV…GTGEGAYMVY (130 aa)) are Extracellular-facing. The residue at position 480 (Tyr480) is a Phosphotyrosine. N-linked (GlcNAc...) asparagine glycosylation is found at Asn498 and Asn548. Residue Asn573 is glycosylated (N-linked (GlcNAc...) asparagine; alternate). A glycan (N-linked (HexNAc...) asparagine; alternate) is linked at Asn573. The chain crosses the membrane as a helical span at residues 599 to 619 (FVSFLGTLAVLPGNIVSALLM). The Cytoplasmic portion of the chain corresponds to 620-626 (DKIGRLR). A helical membrane pass occupies residues 627 to 647 (MLAGSSVLSCVSCFFLSFGNS). Residues 648-651 (ESAM) lie on the Extracellular side of the membrane. Residues 652-672 (IALLCLFGGVSIASWNALDVL) form a helical membrane-spanning segment. At 673 to 685 (TVELYPSDKRTTA) the chain is on the cytoplasmic side. A helical transmembrane segment spans residues 686 to 708 (FGFLNALCKLAAVLGISIFTSFV). Residues 709 to 712 (GITK) lie on the Extracellular side of the membrane. Residues 713-731 (AAPILFASAALALGSSLAL) form a helical membrane-spanning segment. Residues 732-742 (KLPETRGQVLQ) are Cytoplasmic-facing.

It belongs to the major facilitator superfamily. Interacts with SYT1/synaptotagmin-1 in a calcium-dependent manner. Binds the adapter protein complex AP-2. As to quaternary structure, (Microbial infection) Interacts with C.botulinum neurotoxin type A1 and type A2 (BoNT/A, botA). Interaction is improved by glycosylation of SV2. In terms of assembly, (Microbial infection) Copurifies with C.botulinum neurotoxin type B (BoNT/B, botB) and synaptotagmin 1 (SYT1). Interaction does not require glycosylation of SV2 or SYT1 proteins. Another group finds only copurification with SYT1 and SYT2. (Microbial infection) Interacts with C.botulinum neurotoxin type E (BoNT/E). Interaction requires glycosylation of SV2 proteins. As to quaternary structure, (Microbial infection) Copurifies with C.botulinum neurotoxin type F (BoNT/F) and synaptotagmin 1 (SYT2). Another group finds only copurification with BoNT/F. Interaction requires SV2 glycosylation. Post-translationally, phosphorylation by CK1 of the N-terminal cytoplasmic domain regulates interaction with SYT1. N-glycosylated, on at least 3 residues. As to expression, widely expressed throughout the brain (at protein level). Expressed by neural and endocrine cells of brain and spinal cord.

It is found in the presynapse. It localises to the cytoplasmic vesicle. The protein resides in the secretory vesicle. The protein localises to the synaptic vesicle membrane. Its function is as follows. Plays a role in the control of regulated secretion in neural and endocrine cells, enhancing selectively low-frequency neurotransmission. Positively regulates vesicle fusion by maintaining the readily releasable pool of secretory vesicles. (Microbial infection) Receptor for C.botulinum neurotoxin type A (BoNT/A, botA); the toxin binds via extracellular loop 4. Restores uptake of BoNT/A in mouse cells that are deleted for SV2 receptor. Glycosylation of Asn-573 is not essential for receptor activity, but enhances uptake. Also serves as a receptor for the closely related C.botulinum neurotoxin type A2; glycosylation is not essential but enhances the interaction. In terms of biological role, possible receptor for C.botulinum neurotoxin type D (BoNT/D, botD); BoNT/D does not bind to extracellular loop 4 as do BoNT/A and BoNT/E, nor to loop 1 or loop 3. Another group does not find a convincing interaction with SV2. Functionally, (Microbial infection) Receptor for C.botulinum neurotoxin type E (BoNT/E); the toxin probably binds via extracellular loop 4 and requires glycosylation of Asn-573. Restores uptake of BoNT/E in mouse cells that are deleted for SV2 receptor. Its function is as follows. (Microbial infection) Receptor for C.botulinum neurotoxin type F (BoNT/F). Binding requires glycosylation of Asn-573. The polypeptide is Synaptic vesicle glycoprotein 2A (Sv2a) (Rattus norvegicus (Rat)).